The chain runs to 389 residues: MPHALGLTLAVLLLGLATSLAGPFMSLFAVQQVGMTPLQLGLFLTFNALSAVLVSTRLGRWADRRSDRKPLVLLTLAAGVLAYLALSGVRSVYGVMATGVLLLAVSSAAFPQVFAFARSGFAQAPGDLPEKAVTVLRAVFSFAWVVGPGVGAAVLGRWSFSGVFLLAALCYALAGLPLLFIRPPAPAPAQPNSAPSPLTQELGAPPAPPMGWVVAAFTLYGMAMHMGMVMFSLFVTETLHGTSAQVGFLVGLCALLEIPVMLLFVLSKRLPGVEWLIKAGLLLFVVHFALIYLAQGMPLLIATQVLRAAVLAVMAGLGMTYFQQLMPGRFSAATTLYSNTSVVGSMLSGIVAGAWAQVFGYRPVFLLCAALSLAAWGMMLWATRRPKLA.

Transmembrane regions (helical) follow at residues 10–30 (AVLLLGLATSLAGPFMSLFAV), 34–54 (GMTPLQLGLFLTFNALSAVLV), 69–89 (KPLVLLTLAAGVLAYLALSGV), 96–116 (MATGVLLLAVSSAAFPQVFAF), 135–155 (VLRAVFSFAWVVGPGVGAAVL), 161–181 (SGVFLLAALCYALAGLPLLFI), 211–231 (GWVVAAFTLYGMAMHMGMVMF), 246–266 (VGFLVGLCALLEIPVMLLFVL), 281–301 (LLLFVVHFALIYLAQGMPLLI), 308–328 (AAVLAVMAGLGMTYFQQLMPG), 341–361 (SVVGSMLSGIVAGAWAQVFGY), and 363–383 (PVFLLCAALSLAAWGMMLWAT).

This sequence belongs to the major facilitator superfamily. Set transporter family.

It is found in the cell membrane. In terms of biological role, involved in the efflux of sugars. The physiological role may be the detoxification of non-metabolizable sugar analogs. The sequence is that of Putative sugar efflux transporter DR_1322 from Deinococcus radiodurans (strain ATCC 13939 / DSM 20539 / JCM 16871 / CCUG 27074 / LMG 4051 / NBRC 15346 / NCIMB 9279 / VKM B-1422 / R1).